A 286-amino-acid chain; its full sequence is Homoserine kinase (286 aa).

Pro78–Ser88 contacts ATP.

This sequence belongs to the GHMP kinase family. Homoserine kinase subfamily.

The protein localises to the cytoplasm. It carries out the reaction L-homoserine + ATP = O-phospho-L-homoserine + ADP + H(+). Its pathway is amino-acid biosynthesis; L-threonine biosynthesis; L-threonine from L-aspartate: step 4/5. Catalyzes the ATP-dependent phosphorylation of L-homoserine to L-homoserine phosphate. This chain is Homoserine kinase, found in Limosilactobacillus fermentum (strain NBRC 3956 / LMG 18251) (Lactobacillus fermentum).